A 551-amino-acid polypeptide reads, in one-letter code: Histone-lysine N-methyltransferase SETDB2 (551 aa).

Positions Leu146–Cys210 constitute an MBD domain. A Pre-SET domain is found at Val269–Gly329. Positions 271, 273, 277, 283, 285, 310, 314, 316, and 321 each coordinate Zn(2+). Positions Val332 to Thr537 constitute an SET domain. Residue His342 to Trp344 coordinates S-adenosyl-L-methionine. Residues Ser426 to Cys447 form a disordered region. S-adenosyl-L-methionine contacts are provided by residues Arg491 and Thr494–His495.

This sequence belongs to the class V-like SAM-binding methyltransferase superfamily.

It is found in the nucleus. It localises to the chromosome. It carries out the reaction N(6),N(6)-dimethyl-L-lysyl(9)-[histone H3] + S-adenosyl-L-methionine = N(6),N(6),N(6)-trimethyl-L-lysyl(9)-[histone H3] + S-adenosyl-L-homocysteine + H(+). Functionally, histone methyltransferase involved in left-right axis specification in early development and mitosis. Specifically trimethylates 'Lys-9' of histone H3 (H3K9me3). H3K9me3 represents a specific tag for epigenetic transcriptional repression by recruiting HP1 (CBX1, CBX3 and/or CBX5) proteins to methylated histones. Contributes to H3K9me3 in both the interspersed repetitive elements and centromere-associated repeats. Plays a role in chromosome condensation and segregation during mitosis. During early development, required to specify the left-right axis by repressing expression of FGF8, leading to negatively regulate the dorsal organizer formation. This chain is Histone-lysine N-methyltransferase SETDB2 (setdb2), found in Danio rerio (Zebrafish).